Here is a 137-residue protein sequence, read N- to C-terminus: Phosphoribosyl-AMP cyclohydrolase (137 aa).

Asp-84 contributes to the Mg(2+) binding site. Zn(2+) is bound at residue Cys-85. Residues Asp-86 and Asp-88 each contribute to the Mg(2+) site. Cys-101 and Cys-108 together coordinate Zn(2+).

The protein belongs to the PRA-CH family. As to quaternary structure, homodimer. Mg(2+) serves as cofactor. It depends on Zn(2+) as a cofactor.

Its subcellular location is the cytoplasm. The enzyme catalyses 1-(5-phospho-beta-D-ribosyl)-5'-AMP + H2O = 1-(5-phospho-beta-D-ribosyl)-5-[(5-phospho-beta-D-ribosylamino)methylideneamino]imidazole-4-carboxamide. Its pathway is amino-acid biosynthesis; L-histidine biosynthesis; L-histidine from 5-phospho-alpha-D-ribose 1-diphosphate: step 3/9. Functionally, catalyzes the hydrolysis of the adenine ring of phosphoribosyl-AMP. The polypeptide is Phosphoribosyl-AMP cyclohydrolase (Chlorobium chlorochromatii (strain CaD3)).